A 495-amino-acid polypeptide reads, in one-letter code: Probable cobyric acid synthase (495 aa).

Residues 256-441 (DVDIAVIRLT…LHGLFDNVNI (186 aa)) form the GATase cobBQ-type domain. Cysteine 334 acts as the Nucleophile in catalysis. Residue histidine 433 is part of the active site.

The protein belongs to the CobB/CobQ family. CobQ subfamily.

It participates in cofactor biosynthesis; adenosylcobalamin biosynthesis. Its function is as follows. Catalyzes amidations at positions B, D, E, and G on adenosylcobyrinic A,C-diamide. NH(2) groups are provided by glutamine, and one molecule of ATP is hydrogenolyzed for each amidation. The sequence is that of Probable cobyric acid synthase from Methanococcoides burtonii (strain DSM 6242 / NBRC 107633 / OCM 468 / ACE-M).